The sequence spans 1114 residues: Isoleucine--tRNA ligase (1114 aa).

Positions 61–71 match the 'HIGH' region motif; the sequence is PTANGQPGTHH. The short motif at 640-644 is the 'KMSKS' region element; sequence KMSKH. K643 lines the ATP pocket.

This sequence belongs to the class-I aminoacyl-tRNA synthetase family. IleS type 2 subfamily. As to quaternary structure, monomer. It depends on Zn(2+) as a cofactor.

The protein localises to the cytoplasm. It carries out the reaction tRNA(Ile) + L-isoleucine + ATP = L-isoleucyl-tRNA(Ile) + AMP + diphosphate. In terms of biological role, catalyzes the attachment of isoleucine to tRNA(Ile). As IleRS can inadvertently accommodate and process structurally similar amino acids such as valine, to avoid such errors it has two additional distinct tRNA(Ile)-dependent editing activities. One activity is designated as 'pretransfer' editing and involves the hydrolysis of activated Val-AMP. The other activity is designated 'posttransfer' editing and involves deacylation of mischarged Val-tRNA(Ile). This Cutibacterium acnes (strain DSM 16379 / KPA171202) (Propionibacterium acnes) protein is Isoleucine--tRNA ligase.